Here is an 840-residue protein sequence, read N- to C-terminus: Protein translocase subunit SecA (840 aa).

ATP contacts are provided by residues glutamine 85, 103–107 (GEGKT), and aspartate 492. The interval 787–821 (QRERVAKETGASHGGDSQEIKKKPVKKEPKVGRND) is disordered. Residues 802-819 (DSQEIKKKPVKKEPKVGR) are compositionally biased toward basic and acidic residues. Zn(2+) contacts are provided by cysteine 823, cysteine 825, cysteine 834, and cysteine 835.

This sequence belongs to the SecA family. In terms of assembly, monomer and homodimer. Part of the essential Sec protein translocation apparatus which comprises SecA, SecYEG and auxiliary proteins SecDF. Other proteins may also be involved. Zn(2+) serves as cofactor.

The protein resides in the cell membrane. The protein localises to the cytoplasm. It carries out the reaction ATP + H2O + cellular proteinSide 1 = ADP + phosphate + cellular proteinSide 2.. Functionally, part of the Sec protein translocase complex. Interacts with the SecYEG preprotein conducting channel. Has a central role in coupling the hydrolysis of ATP to the transfer of proteins into and across the cell membrane, serving as an ATP-driven molecular motor driving the stepwise translocation of polypeptide chains across the membrane. The chain is Protein translocase subunit SecA from Clostridium perfringens (strain SM101 / Type A).